Consider the following 101-residue polypeptide: MAKQSMKAREVKRVALADKFFAKRAELKAIISDVNATDEDRWNAVLKLQTLPRDSSPSRQRNRCRQTGRPHGFLRKFGLSRIKVREAAMRGEIPGLKKASW.

The protein belongs to the universal ribosomal protein uS14 family. Part of the 30S ribosomal subunit. Contacts proteins S3 and S10.

In terms of biological role, binds 16S rRNA, required for the assembly of 30S particles and may also be responsible for determining the conformation of the 16S rRNA at the A site. This chain is Small ribosomal subunit protein uS14, found in Klebsiella pneumoniae (strain 342).